Here is a 364-residue protein sequence, read N- to C-terminus: Long-wave-sensitive opsin 1 (364 aa).

The Extracellular segment spans residues 1–52 (MTQRWGPQRLAGGQPHAGLEDSTRASIFTYTNSNATRGPFEGPNYHIAPRWV). Ser22 carries an O-linked (GlcNAc) serine glycan. N-linked (GlcNAc...) asparagine glycosylation occurs at Asn34. The helical transmembrane segment at 53-77 (YHVTSAWMIFVVIASVFTNGLVLAA) threads the bilayer. Residues 78 to 89 (TMKFKKLRHPLN) lie on the Cytoplasmic side of the membrane. Residues 90–115 (WILVNLAVADLAETIIASTISVVNQI) traverse the membrane as a helical segment. Residues 116–129 (YGYFVLGHPMCVLE) are Extracellular-facing. Cys126 and Cys203 are oxidised to a cystine. Residues 130–149 (GYTVSLCGITGLWSLAIISW) form a helical membrane-spanning segment. At 150–168 (ERWLVVCKPFGNVRFDAKL) the chain is on the cytoplasmic side. Residues 169-192 (AIAGIAFSWIWAAVWTAPPIFGWS) form a helical membrane-spanning segment. At 193 to 218 (RYWPHGLKTSCGPDVFSGSSYPGVQS) the chain is on the extracellular side. The helical transmembrane segment at 219–246 (YMIVLMITCCIIPLSVIVLCYLQVWLAI) threads the bilayer. The Cytoplasmic segment spans residues 247-268 (RAVAKQQKESESTQKAEKEVTR). A helical transmembrane segment spans residues 269–292 (MVMVMIFAYCVCWGPYTFFACFAA). Residues 293–300 (AHPGYAFH) are Extracellular-facing. The chain crosses the membrane as a helical span at residues 301–325 (PLVAALPAYFAKSATIYNPIIYVFM). An N6-(retinylidene)lysine modification is found at Lys312. The Cytoplasmic segment spans residues 326-364 (NRQFRNCIMQLFGKKVDDGSELSSASRTEASSVSSVSPA).

The protein belongs to the G-protein coupled receptor 1 family. Opsin subfamily. Phosphorylated on some or all of the serine and threonine residues present in the C-terminal region. The three color pigments are found in the cone photoreceptor cells. Expressed in retina.

The protein resides in the membrane. Functionally, visual pigments are the light-absorbing molecules that mediate vision. They consist of an apoprotein, opsin, covalently linked to cis-retinal. This chain is Long-wave-sensitive opsin 1 (OPN1LW), found in Felis catus (Cat).